Reading from the N-terminus, the 33-residue chain is U1-pseudomyrmecitoxin-Pt1 subunit LS2 (33 aa).

This sequence belongs to the myrmexin family. Heterodimer composed of subunit LS2 and subunit SS1, heterodimer composed of subunit LS2 and SS2, and heterodimer composed of subunit LS2 and SS3; disulfide-linked. Expressed by the venom gland.

It localises to the secreted. In terms of biological role, this heterodimer may have anti-inflammatory properties, since the myrmexin complex (composed of 6 SS-LS heterodimers) inhibits carrageenin-induced edema in a dose-dependent manner (after subcutaneous injection into rats). This Pseudomyrmex triplarinus (Ant) protein is U1-pseudomyrmecitoxin-Pt1 subunit LS2.